Here is a 169-residue protein sequence, read N- to C-terminus: S-ribosylhomocysteine lyase (169 aa).

Positions 54, 58, and 128 each coordinate Fe cation.

It belongs to the LuxS family. In terms of assembly, homodimer. Fe cation is required as a cofactor.

It carries out the reaction S-(5-deoxy-D-ribos-5-yl)-L-homocysteine = (S)-4,5-dihydroxypentane-2,3-dione + L-homocysteine. Functionally, involved in the synthesis of autoinducer 2 (AI-2) which is secreted by bacteria and is used to communicate both the cell density and the metabolic potential of the environment. The regulation of gene expression in response to changes in cell density is called quorum sensing. Catalyzes the transformation of S-ribosylhomocysteine (RHC) to homocysteine (HC) and 4,5-dihydroxy-2,3-pentadione (DPD). In Shewanella frigidimarina (strain NCIMB 400), this protein is S-ribosylhomocysteine lyase.